Consider the following 74-residue polypeptide: Tetrahydromethanopterin S-methyltransferase subunit G (74 aa).

Residues 50–70 traverse the membrane as a helical segment; that stretch reads IGILYGLVIGLYLCMLYILLG.

The protein belongs to the MtrG family. As to quaternary structure, the complex is composed of 8 subunits; MtrA, MtrB, MtrC, MtrD, MtrE, MtrF, MtrG and MtrH.

It is found in the cell membrane. It catalyses the reaction 5-methyl-5,6,7,8-tetrahydromethanopterin + coenzyme M + 2 Na(+)(in) = 5,6,7,8-tetrahydromethanopterin + methyl-coenzyme M + 2 Na(+)(out). Its pathway is one-carbon metabolism; methanogenesis from CO(2); methyl-coenzyme M from 5,10-methylene-5,6,7,8-tetrahydromethanopterin: step 2/2. Part of a complex that catalyzes the formation of methyl-coenzyme M and tetrahydromethanopterin from coenzyme M and methyl-tetrahydromethanopterin. This is an energy-conserving, sodium-ion translocating step. The chain is Tetrahydromethanopterin S-methyltransferase subunit G from Methanopyrus kandleri (strain AV19 / DSM 6324 / JCM 9639 / NBRC 100938).